The chain runs to 484 residues: GDP-mannose transporter (484 aa).

Composition is skewed to basic and acidic residues over residues 1-12 (MSMTTSRERNVP) and 19-28 (ELGRSRHSDV). The interval 1 to 34 (MSMTTSRERNVPPDDNEIELGRSRHSDVAPESES) is disordered. The Cytoplasmic segment spans residues 1–60 (MSMTTSRERNVPPDDNEIELGRSRHSDVAPESESPQAHLLNSDVASVTKNFMRNASHATA). The chain crosses the membrane as a helical span at residues 61–81 (NSGAIAAVLSYCIASISMTVI). Topologically, residues 82 to 90 (NKFTVSGEK) are lumenal. Residues 91 to 111 (FTMNLLVLLCQCSVGVAMVYA) traverse the membrane as a helical segment. At 112 to 129 (AKCMGWIQIRTLNMRDVK) the chain is on the cytoplasmic side. Residues 130–150 (TWFPISTMLVFVIYTGSKALQ) form a helical membrane-spanning segment. Topologically, residues 151–155 (HMDIP) are lumenal. The chain crosses the membrane as a helical span at residues 156–176 (IYTIFKNLTIILIAYGELLWF). Over 177–179 (NGR) the chain is Cytoplasmic. Residues 180-200 (ITPMVFLSFILMVLSSIIAAW) traverse the membrane as a helical segment. The Lumenal segment spans residues 201 to 287 (PDLAPSTAKT…ASSSTLSSWS (87 aa)). Residues 288-308 (TNGYVWMLANCMISATYVLVM) form a helical membrane-spanning segment. Over 309–321 (RKRIKLTGFKDWD) the chain is Cytoplasmic. A helical transmembrane segment spans residues 322-342 (TMFYNNLLSIPVLLFMSLLVE). Asn343 carries N-linked (GlcNAc...) asparagine glycosylation. Residues 343–360 (NWSVETFEHNFPREKRST) are Lumenal-facing. The helical transmembrane segment at 361-381 (LVFAILLSGTGGVFISYTTAW) threads the bilayer. Topologically, residues 382-390 (CIRVTSSTT) are cytoplasmic. Residues 391–411 (YSMVGALNKLPLALSGMLFFG) traverse the membrane as a helical segment. Residues 412–413 (NP) lie on the Lumenal side of the membrane. The helical transmembrane segment at 414 to 434 (VTPYNSIGVAVGFIAGIVYAV) threads the bilayer. The Cytoplasmic segment spans residues 435–484 (GKYKQVVAARIANSDATGASTSLSSSSSAAPSGEYVFDLKGEIPTHTRQQ).

This sequence belongs to the TPT transporter family. SLC35D subfamily. Homooligomer.

It localises to the golgi apparatus membrane. It is found in the cytoplasmic vesicle membrane. The protein resides in the endoplasmic reticulum membrane. Functionally, involved in the import of GDP-mannose from the cytoplasm into the Golgi lumen. The sequence is that of GDP-mannose transporter (VRG4) from Malassezia globosa (strain ATCC MYA-4612 / CBS 7966) (Dandruff-associated fungus).